Consider the following 174-residue polypeptide: Large ribosomal subunit protein uL13 (174 aa).

Disordered regions lie at residues 1–22 and 153–174; these read MAFP…AKSP and GETH…LEVK.

This sequence belongs to the universal ribosomal protein uL13 family. As to quaternary structure, part of the 50S ribosomal subunit. Contacts proteins L3 and L20.

This protein is one of the early assembly proteins of the 50S ribosomal subunit. Binds to the 23S rRNA. This chain is Large ribosomal subunit protein uL13 (rplM), found in Deinococcus radiodurans (strain ATCC 13939 / DSM 20539 / JCM 16871 / CCUG 27074 / LMG 4051 / NBRC 15346 / NCIMB 9279 / VKM B-1422 / R1).